The chain runs to 1215 residues: MPRRPRRNAKTSDKAEDAQTLVAPAANASVSSTVNTTTSPTLAAGNESQQRAGIDPNQAGSAGVGDAAPSSRVDNDGDVITRPTSDSIAAIANATKPAAVINNAQATALVPTSNPHAYRCNVCNAEFPSMSAMTEHLRTSHRDEPSTLLATPVINAAIQAFLQAWDGLRLLAPDVSSEALSKYLDSTVDSSPDLIVEDQGLCTSFMLIDNVPASHLSPELIGFTWFMQMYQMTPPLPEGAVNRIVCMTNWASLGDPSRGIEVRLPPPTDNTVHAYKTVLSQGYVASSQFSPLTFRANTLLMLTQFVLSNLKINKSSTFTSDVTTLTVGRMICSFEARPELLALAYPGRAVLPVNTKNAQFLATAIPDRIGRIDRANLIGGEVSASVECMELCDSLTLYIRENYLMLLRSMHQDPTRIVQIVNECARNLLNSSIPVNLRPSILCPWFASTADLRLQQAIHLVNISSNTAAALPQVEALSSLLRSVTPLVLNPTILTNAITTISESTTQTISPISEILRLLSPTGNDYAAFWKCIASWAYNGLVQTVLSEDAFPDSSQSITHLPSMWKCMLLTLAAPMTSDPHSPVKVFMSLANLLAQPEPIVINVDGMHQTTPASQFSHPGVWPPGFINPAQIPVAQAPLLRAFADHIHANWPQPSDFEYGSAAQGSGNLFIPPNRMVYPWPNAPLPRMTVAATFDSAMSQWISTTIAFFIRVVNAPIMAPTVNDLTRRTITGVLTAMRQVKTMTPFYIQHMCPTELAVLGSITLVPPFQVPFTRLVQNDAITNVLVARVDPTQRGDAAVDIRATHATFSAALPVDPASIVVAMLCGQTPTNLIPSHHYGKAFAPLFTSNAMFTRNQRAVITREALVCARSIVAQCQDDGFNVPRPLAGLRQFDITSAAAAEIWHAVNDAFKTAFDIDGALLDGMGLYGDPRIADISVAYLQYDGRVTREHVPPDQSFIHRALLTTENTFLAEMNLFNVGAGDIFLIQTPTNGNWAPMVPVAHPPFARGGPNVNVVGNHGTLAMRPNGLEPQLIDNAGVPRDIAGDWIYPIDVLQVSVSTFRDYVWPLVVAGRVRVRIEIPHYVYTTHYHQPQTTFTDAQLVETWLAGIDPTGIPPIPFSIPIPQVGACITSRRVYHVFAAQNNNNSLFSTNSSSIATVFGEDAGVSPARWPALVDPNYQFGTNELPNRITLYGSLFRYNFTYPSLSGVMFMRSAE.

Residues 1–81 form a disordered region; that stretch reads MPRRPRRNAK…RVDNDGDVIT (81 aa). Positions 21–44 are enriched in low complexity; that stretch reads LVAPAANASVSSTVNTTTSPTLAA. A C2H2-type zinc finger spans residues 118-141; sequence YRCNVCNAEFPSMSAMTEHLRTSH.

The protein belongs to the turreted BTV-fold inner capsid family. In terms of assembly, homodecamer; each decamer is made up of two conformers of VP2, called VP2A and VP2B. 12 homodecamers assemble to form an icosahedral capsid. Interacts with VP6.

The protein resides in the virion. Functionally, inner capsid protein that self-assembles to form an icosahedral capsid with a T=2 symmetry, which consists of 120 copies of VP2, with channels at each of its five-fold vertices. This capsid constitutes the innermost concentric layer of the viral mature particle. The protein is Inner capsid protein VP3 (S3) of Ctenopharyngodon idella (Grass carp).